The chain runs to 178 residues: Large ribosomal subunit protein uL5 (178 aa).

It belongs to the universal ribosomal protein uL5 family. As to quaternary structure, part of the 50S ribosomal subunit; part of the 5S rRNA/L5/L18/L25 subcomplex. Contacts the 5S rRNA and the P site tRNA. Forms a bridge to the 30S subunit in the 70S ribosome.

This is one of the proteins that bind and probably mediate the attachment of the 5S RNA into the large ribosomal subunit, where it forms part of the central protuberance. In the 70S ribosome it contacts protein S13 of the 30S subunit (bridge B1b), connecting the 2 subunits; this bridge is implicated in subunit movement. Contacts the P site tRNA; the 5S rRNA and some of its associated proteins might help stabilize positioning of ribosome-bound tRNAs. This chain is Large ribosomal subunit protein uL5, found in Syntrophomonas wolfei subsp. wolfei (strain DSM 2245B / Goettingen).